The primary structure comprises 189 residues: ATP-dependent protease subunit HslV (189 aa).

The active site involves Thr-12. Positions 172, 175, and 178 each coordinate Na(+).

Belongs to the peptidase T1B family. HslV subfamily. In terms of assembly, a double ring-shaped homohexamer of HslV is capped on each side by a ring-shaped HslU homohexamer. The assembly of the HslU/HslV complex is dependent on binding of ATP.

The protein resides in the cytoplasm. The catalysed reaction is ATP-dependent cleavage of peptide bonds with broad specificity.. Its activity is regulated as follows. Allosterically activated by HslU binding. Protease subunit of a proteasome-like degradation complex believed to be a general protein degrading machinery. The polypeptide is ATP-dependent protease subunit HslV (Ehrlichia chaffeensis (strain ATCC CRL-10679 / Arkansas)).